Here is a 132-residue protein sequence, read N- to C-terminus: Interleukin-5 (132 aa).

A signal peptide spans 1–19 (MRMLLCLNVLTLSCVWAIA). Residues Asn-45, Asn-74, and Asn-88 are each glycosylated (N-linked (GlcNAc...) asparagine).

Belongs to the IL-5 family. Homodimer; disulfide-linked. Interacts with IL5RA. Interacts with CSF2RB.

The protein localises to the secreted. Functionally, homodimeric cytokine expressed predominantly by T-lymphocytes and NK cells that plays an important role in the survival, differentiation, and chemotaxis of eosinophils. Acts also on activated and resting B-cells to induce immunoglobulin production, growth, and differentiation. Mechanistically, exerts its biological effects through a receptor composed of IL5RA subunit and the cytokine receptor common subunit beta/CSF2RB. Binding to the receptor leads to activation of various kinases including LYN, SYK and JAK2 and thereby propagates signals through the RAS-MAPK and JAK-STAT5 pathways respectively. The sequence is that of Interleukin-5 (Il5) from Rattus norvegicus (Rat).